The chain runs to 400 residues: Elongation factor Tu (400 aa).

The region spanning 10 to 208 is the tr-type G domain; it reads KPHLNVGTIG…TMDSYFPEPQ (199 aa). Positions 19–26 are G1; the sequence is GHIDHGKT. 19–26 provides a ligand contact to GTP; that stretch reads GHIDHGKT. Threonine 26 contacts Mg(2+). The interval 60–64 is G2; it reads GITIN. The tract at residues 81–84 is G3; that stretch reads DCPG. GTP is bound by residues 81–85 and 136–139; these read DCPGH and NKTD. Residues 136-139 form a G4 region; the sequence is NKTD. The interval 174–176 is G5; it reads SAL.

Belongs to the TRAFAC class translation factor GTPase superfamily. Classic translation factor GTPase family. EF-Tu/EF-1A subfamily. In terms of assembly, monomer.

The protein resides in the cytoplasm. It catalyses the reaction GTP + H2O = GDP + phosphate + H(+). Its function is as follows. GTP hydrolase that promotes the GTP-dependent binding of aminoacyl-tRNA to the A-site of ribosomes during protein biosynthesis. The protein is Elongation factor Tu of Thermosipho africanus (strain TCF52B).